A 373-amino-acid chain; its full sequence is MTDLSIVSVETTILDVPLVRPHKFATTSMTAQPLLLVAVTTAGGVTGYGEGVVPGGPWWGGESVETMQAIVERYIVPVLLGRGVDEITGIMPDIERVVANARFAKAAVDVALHDAWARSLGVPVHTLLGGAFRKSVDVTWALGAAPAEEIIEEALDLVESKRHFSFKLKMGALDPAVDTARVVQIAQALQGKAGVRIDVNARWDRLTALKYVPRLVEGGVELIEQPTPGEQLEVLAELNRLVPVPVMADESVQTPHDALEVARRGAADVIALKTTKCGGLQKSREVVAIAKAAGIACHGATSIEGPIGTAASIHFACAEPGIDFGTELFGPLLFSEELLQEPIRYADGQVFLPEGPGLGVELNMDAVKTWTRN.

The active site involves lysine 169. The active-site Proton acceptor is lysine 169. Mn(2+) contacts are provided by aspartate 198, glutamate 224, and aspartate 249. Glutamate 327 (proton donor) is an active-site residue.

It belongs to the mandelate racemase/muconate lactonizing enzyme family. The cofactor is Mn(2+).

The catalysed reaction is (S)-muconolactone = cis,cis-muconate + H(+). The protein is Muconate cycloisomerase 1 (catB) of Rhodococcus opacus (Nocardia opaca).